The following is a 1158-amino-acid chain: cGMP-specific 3',5'-cyclic phosphodiesterase (1158 aa).

2 disordered regions span residues 1 to 137 (MTDV…SQHD) and 195 to 216 (SPTVQQKSPRSLSNSSASSIPE). The segment covering 30 to 71 (ATTSAAASASSSQAKPLTNGAKKAATAAAAAGAEEGGASASN) has biased composition (low complexity). Positions 108-135 (GSTSKSSSIHTQTSQQERAGRPTSSASQ) are enriched in polar residues. Low complexity predominate over residues 202 to 215 (SPRSLSNSSASSIP). 2 GAF domains span residues 242–394 (DIDV…GIGI) and 426–640 (NLEC…GLGI). Residues 670–993 (SQDQTEKLTQ…RNWQDLAEKV (324 aa)) enclose the PDEase domain. The active-site Proton donor is the histidine 746. A divalent metal cation is bound by residues histidine 750, histidine 786, aspartate 787, and aspartate 897. Disordered stretches follow at residues 1034–1065 (QSQQSQHGSEDSHTPEHQRSGSRLSMKKTGAL) and 1097–1158 (VSED…CALL). Residues 1041-1052 (GSEDSHTPEHQR) show a composition bias toward basic and acidic residues. Low complexity predominate over residues 1114–1130 (AAGSMGRMSASSSTSSA). The segment covering 1148 to 1158 (SKKRSKLCALL) has biased composition (basic residues). Cysteine 1155 is modified (cysteine methyl ester). Cysteine 1155 carries S-farnesyl cysteine lipidation. Residues 1156-1158 (ALL) constitute a propeptide, removed in mature form.

The protein belongs to the cyclic nucleotide phosphodiesterase family. Interacts with PrBP. A divalent metal cation serves as cofactor.

The protein resides in the cell membrane. It carries out the reaction 3',5'-cyclic GMP + H2O = GMP + H(+). In terms of biological role, has a role regulating cGMP transport in Malpighian tubule principal cells. This chain is cGMP-specific 3',5'-cyclic phosphodiesterase, found in Drosophila ananassae (Fruit fly).